Consider the following 154-residue polypeptide: uncharacterized protein (154 aa).

Transmembrane regions (helical) follow at residues 19–39 (LFAYAAAFLIAVAHVAGGLLL) and 51–71 (ADQVAMGALGLVLAGAVLLFA).

Its subcellular location is the cell membrane. This is an uncharacterized protein from Mycobacterium tuberculosis (strain CDC 1551 / Oshkosh).